Here is a 423-residue protein sequence, read N- to C-terminus: MVIRSEIVSIGDELLKGQRVNTNASFIASALSDIGIPVVRVVACGDAEEEIMSALRESLERADIVLVTGGLGPTRDDRTLKAAAGLLQRDLKLSPAAFDALQEWFVSRGRKMPEAMRDQARIIEGSLLVPNTTGTAAGMIADAGERFMNHTLVLMPGVPSEMKAMMNQTVIPYFATSSKMVIRHTPVRTLGIGETLLAELVVEVEDHMPEGTTLAYLPHTAGVDLMVSTIGSSVEAVERDNRGVVDALLARTGRYVYATEDVTIEETVGRLLAQRGMTIAVAESCTGGLLASRLTDIAGSSRYFLEGVVVYSNKAKEHFLGVKFETLQLYGAVSPEVAAEMAEGCLFVSGADIAVSTTGIAGPSNESEDKPVGMLCLGVARKEPGGEVSVSTRTLFYHGTREQNKLRFSQAALCEVWESLQDR.

This sequence belongs to the CinA family.

In Chlorobium phaeobacteroides (strain DSM 266 / SMG 266 / 2430), this protein is CinA-like protein.